The chain runs to 560 residues: Putative transport protein VP1232 (560 aa).

5 consecutive transmembrane segments (helical) span residues 8–28, 37–57, 66–86, 91–111, and 164–184; these read LLDQ…LAIG, LGNS…GFSF, FMLF…GIFF, HYFI…YGLS, and VGYA…AKLL. RCK C-terminal domains follow at residues 205–292 and 293–376; these read LGNS…FRNG and KEVF…KIGF. A run of 6 helical transmembrane segments spans residues 386–406, 409–429, 443–463, 478–498, 506–526, and 539–559; these read LLAF…TMTF, VSFS…LGFL, ALNM…GLSA, VIGL…LVGA, ALLF…DVVN, and AGTY…LIIL.

This sequence belongs to the AAE transporter (TC 2.A.81) family. YbjL subfamily.

The protein resides in the cell membrane. The sequence is that of Putative transport protein VP1232 from Vibrio parahaemolyticus serotype O3:K6 (strain RIMD 2210633).